We begin with the raw amino-acid sequence, 224 residues long: Phosphoglycolate phosphatase (224 aa).

Residue aspartate 11 is the Nucleophile of the active site. 3 residues coordinate Mg(2+): aspartate 11, aspartate 13, and aspartate 177.

Belongs to the HAD-like hydrolase superfamily. CbbY/CbbZ/Gph/YieH family. Mg(2+) is required as a cofactor.

The enzyme catalyses 2-phosphoglycolate + H2O = glycolate + phosphate. Its pathway is organic acid metabolism; glycolate biosynthesis; glycolate from 2-phosphoglycolate: step 1/1. In terms of biological role, specifically catalyzes the dephosphorylation of 2-phosphoglycolate. Is involved in the dissimilation of the intracellular 2-phosphoglycolate formed during the DNA repair of 3'-phosphoglycolate ends, a major class of DNA lesions induced by oxidative stress. The polypeptide is Phosphoglycolate phosphatase (Haemophilus influenzae (strain 86-028NP)).